The chain runs to 93 residues: C-C motif chemokine 14 (93 aa).

An N-terminal signal peptide occupies residues 1-19 (MKISVAAIPFFLLITIALG). S26 carries an O-linked (GalNAc...) serine; partial glycan. 2 cysteine pairs are disulfide-bonded: C35–C59 and C36–C75.

This sequence belongs to the intercrine beta (chemokine CC) family. In terms of processing, the N-terminal processed forms HCC-1(3-74), HCC-1(4-74) and HCC-1(9-74) are produced in small amounts by proteolytic cleavage after secretion in blood. HCC-1(1-74), but not HCC-1(3-74) and HCC-1(4-74), is partially O-glycosylated; the O-linked glycan consists of one Gal-GalNAc disaccharide, further modified by two N-acetylneuraminic acids. In terms of tissue distribution, expressed constitutively in several normal tissues: spleen, liver, skeletal and heart muscle, gut, and bone marrow, present at high concentrations (1-80 nM) in plasma.

It localises to the secreted. In terms of biological role, has weak activities on human monocytes and acts via receptors that also recognize MIP-1 alpha. It induces intracellular Ca(2+) changes and enzyme release, but no chemotaxis, at concentrations of 100-1,000 nM, and is inactive on T-lymphocytes, neutrophils, and eosinophil leukocytes. Enhances the proliferation of CD34 myeloid progenitor cells. The processed form HCC-1(9-74) is a chemotactic factor that attracts monocytes, eosinophils, and T-cells and is a ligand for CCR1, CCR3 and CCR5. The chain is C-C motif chemokine 14 (CCL14) from Homo sapiens (Human).